A 142-amino-acid polypeptide reads, in one-letter code: Autophagy-related protein 31 (142 aa).

Its subcellular location is the cytoplasm. The protein resides in the cytoskeleton. The protein localises to the preautophagosomal structure. Plays a role in starvation-induced autophagy. Involved in mitophagy. Functions with ATG17 and ATG29 at the preautophagosomal structure (PAS) in order to form normal autophagosomes under starvation conditions. May be involved in microtubule function, such as chromosome segregation and karyogamy. The polypeptide is Autophagy-related protein 31 (CIS1) (Eremothecium gossypii (strain ATCC 10895 / CBS 109.51 / FGSC 9923 / NRRL Y-1056) (Yeast)).